A 113-amino-acid chain; its full sequence is Hydrogenase maturation factor HypA (113 aa).

A Ni(2+)-binding site is contributed by histidine 2. Positions 73, 76, 89, and 92 each coordinate Zn(2+).

The protein belongs to the HypA/HybF family.

Functionally, involved in the maturation of [NiFe] hydrogenases. Required for nickel insertion into the metal center of the hydrogenase. This Rhodopseudomonas palustris (strain BisA53) protein is Hydrogenase maturation factor HypA.